A 116-amino-acid chain; its full sequence is Aspartate 1-decarboxylase (116 aa).

S25 (schiff-base intermediate with substrate; via pyruvic acid) is an active-site residue. S25 is modified (pyruvic acid (Ser)). T57 lines the substrate pocket. The active-site Proton donor is Y58. 73 to 75 lines the substrate pocket; the sequence is GAA.

The protein belongs to the PanD family. In terms of assembly, heterooctamer of four alpha and four beta subunits. The cofactor is pyruvate. In terms of processing, is synthesized initially as an inactive proenzyme, which is activated by self-cleavage at a specific serine bond to produce a beta-subunit with a hydroxyl group at its C-terminus and an alpha-subunit with a pyruvoyl group at its N-terminus.

It localises to the cytoplasm. It catalyses the reaction L-aspartate + H(+) = beta-alanine + CO2. Its pathway is cofactor biosynthesis; (R)-pantothenate biosynthesis; beta-alanine from L-aspartate: step 1/1. Catalyzes the pyruvoyl-dependent decarboxylation of aspartate to produce beta-alanine. The protein is Aspartate 1-decarboxylase of Leptospira interrogans serogroup Icterohaemorrhagiae serovar Lai (strain 56601).